The sequence spans 102 residues: NADH-quinone oxidoreductase subunit K (102 aa).

Transmembrane regions (helical) follow at residues 5–25 (IAHY…GIFL), 31–51 (IIIL…FIAF), and 66–86 (FVLT…VVFF).

Belongs to the complex I subunit 4L family. As to quaternary structure, NDH-1 is composed of 14 different subunits. Subunits NuoA, H, J, K, L, M, N constitute the membrane sector of the complex.

Its subcellular location is the cell inner membrane. The catalysed reaction is a quinone + NADH + 5 H(+)(in) = a quinol + NAD(+) + 4 H(+)(out). Functionally, NDH-1 shuttles electrons from NADH, via FMN and iron-sulfur (Fe-S) centers, to quinones in the respiratory chain. The immediate electron acceptor for the enzyme in this species is believed to be ubiquinone. Couples the redox reaction to proton translocation (for every two electrons transferred, four hydrogen ions are translocated across the cytoplasmic membrane), and thus conserves the redox energy in a proton gradient. The chain is NADH-quinone oxidoreductase subunit K from Chelativorans sp. (strain BNC1).